The sequence spans 321 residues: F-box protein At4g35930 (321 aa).

Residues 1–13 (MGKVSPKDLDSKT) are compositionally biased toward basic and acidic residues. A disordered region spans residues 1–23 (MGKVSPKDLDSKTSVRKKKLKSS). The region spanning 159–207 (ESQLESLPMDLLVKIVCHLHHDQLKAVFHVSQRIRMATILARQYHFNYT) is the F-box domain. The tract at residues 228-258 (WPFRRGDGNPTMVSSPHTPKAPKHAPRPPSR) is disordered.

The sequence is that of F-box protein At4g35930 from Arabidopsis thaliana (Mouse-ear cress).